A 391-amino-acid polypeptide reads, in one-letter code: Multidrug resistance protein MdtL (391 aa).

12 helical membrane passes run 4–24 (FLIC…MYLV), 42–62 (IAFS…GKVA), 69–89 (PVAI…SLAE), 93–113 (LFLA…VVAF), 131–151 (LLNG…HLIM), 158–178 (SLFW…LFIL), 203–222 (FFLS…LTFV), 245–265 (ALTA…LGIF), 269–289 (TLMI…AVSP), 293–313 (VSLF…GVAM), 331–351 (LGIA…VVGI), and 356–376 (MLIG…MFVA).

It belongs to the major facilitator superfamily. DHA1 family. MdtL (TC 2.A.1.2.22) subfamily.

It localises to the cell inner membrane. Its function is as follows. Confers resistance to chloramphenicol. This chain is Multidrug resistance protein MdtL, found in Escherichia coli (strain 55989 / EAEC).